The chain runs to 257 residues: Major prion protein (257 aa).

A signal peptide spans 1-24; that stretch reads MVKSHIGGWILLLFVATWSDVGLC. The interaction with GRB2, ERI3 and SYN1 stretch occupies residues 25–234; it reads KKRPKPGGWN…ESEAYYQRGA (210 aa). The tract at residues 28-110 is disordered; the sequence is PKPGGWNTGG…GQWGKPNKPK (83 aa). 2 stretches are compositionally biased toward gly residues: residues 33–48 and 55–101; these read WNTG…GSPG and QGGG…GSHG. A run of 5 repeats spans residues 54–62, 63–70, 71–78, 79–86, and 87–95. A 5 X 8 AA tandem repeats of P-H-G-G-G-W-G-Q region spans residues 54–95; the sequence is PQGGGGWGQPHGGGWGQPHGGGWGQPHGGGWGQPHGGGGWGQ. Residues His-64, Gly-65, Gly-66, His-72, Gly-73, Gly-74, His-80, Gly-81, Gly-82, His-88, Gly-90, and Gly-91 each coordinate Cu(2+). Cysteines 183 and 218 form a disulfide. N-linked (GlcNAc...) asparagine glycans are attached at residues Asn-185 and Asn-201. Residue Ala-234 is the site of GPI-anchor amidated alanine attachment. A propeptide spans 235–257 (removed in mature form); sequence SAILFSPPPVILLISLLILLIVG.

It belongs to the prion family. In terms of assembly, monomer and homodimer. Has a tendency to aggregate into amyloid fibrils containing a cross-beta spine, formed by a steric zipper of superposed beta-strands. Soluble oligomers may represent an intermediate stage on the path to fibril formation. Copper binding may promote oligomerization. Interacts with GRB2, APP, ERI3/PRNPIP and SYN1. Mislocalized cytosolically exposed PrP interacts with MGRN1; this interaction alters MGRN1 subcellular location and causes lysosomal enlargement. Interacts with KIAA1191.

It is found in the cell membrane. The protein localises to the golgi apparatus. Its primary physiological function is unclear. Has cytoprotective activity against internal or environmental stresses. May play a role in neuronal development and synaptic plasticity. May be required for neuronal myelin sheath maintenance. May play a role in iron uptake and iron homeostasis. Soluble oligomers are toxic to cultured neuroblastoma cells and induce apoptosis (in vitro). Association with GPC1 (via its heparan sulfate chains) targets PRNP to lipid rafts. Also provides Cu(2+) or Zn(2+) for the ascorbate-mediated GPC1 deaminase degradation of its heparan sulfate side chains. In Vulpes lagopus (Arctic fox), this protein is Major prion protein.